We begin with the raw amino-acid sequence, 290 residues long: 33 kDa chaperonin (290 aa).

2 cysteine pairs are disulfide-bonded: cysteine 231/cysteine 233 and cysteine 264/cysteine 267.

This sequence belongs to the HSP33 family. In terms of processing, under oxidizing conditions two disulfide bonds are formed involving the reactive cysteines. Under reducing conditions zinc is bound to the reactive cysteines and the protein is inactive.

Its subcellular location is the cytoplasm. Functionally, redox regulated molecular chaperone. Protects both thermally unfolding and oxidatively damaged proteins from irreversible aggregation. Plays an important role in the bacterial defense system toward oxidative stress. The polypeptide is 33 kDa chaperonin (Photorhabdus laumondii subsp. laumondii (strain DSM 15139 / CIP 105565 / TT01) (Photorhabdus luminescens subsp. laumondii)).